Here is a 397-residue protein sequence, read N- to C-terminus: Tryptophan synthase beta chain (397 aa).

Residue lysine 87 is modified to N6-(pyridoxal phosphate)lysine.

It belongs to the TrpB family. In terms of assembly, tetramer of two alpha and two beta chains. Pyridoxal 5'-phosphate serves as cofactor.

It catalyses the reaction (1S,2R)-1-C-(indol-3-yl)glycerol 3-phosphate + L-serine = D-glyceraldehyde 3-phosphate + L-tryptophan + H2O. The protein operates within amino-acid biosynthesis; L-tryptophan biosynthesis; L-tryptophan from chorismate: step 5/5. Its function is as follows. The beta subunit is responsible for the synthesis of L-tryptophan from indole and L-serine. In Salmonella choleraesuis (strain SC-B67), this protein is Tryptophan synthase beta chain.